The following is a 31-amino-acid chain: Kalata-B9 (31 aa).

Residues 1–31 (GSVFNCGETCVLGTCYTPGCTCNTYRVCTKD) constitute a cross-link (cyclopeptide (Gly-Asp)). 3 cysteine pairs are disulfide-bonded: Cys-6–Cys-20, Cys-10–Cys-22, and Cys-15–Cys-28.

This sequence belongs to the cyclotide family. Bracelet subfamily. In terms of processing, this peptide occurs in both cyclic and linear forms.

Its function is as follows. Probably participates in a plant defense mechanism. The chain is Kalata-B9 from Oldenlandia affinis.